Here is an 860-residue protein sequence, read N- to C-terminus: Glucans biosynthesis glucosyltransferase H (860 aa).

The next 6 membrane-spanning stretches (helical) occupy residues 146–166 (ILLI…KGIL), 200–220 (ILLL…TALM), 519–539 (VFLT…FLVL), 576–596 (LFST…ILIW), 610–630 (TVSM…RMLF), and 686–706 (FLWW…VSVI).

Belongs to the glycosyltransferase 2 family. OpgH subfamily.

The protein localises to the cell inner membrane. It functions in the pathway glycan metabolism; osmoregulated periplasmic glucan (OPG) biosynthesis. Involved in the biosynthesis of osmoregulated periplasmic glucans (OPGs). This is Glucans biosynthesis glucosyltransferase H from Pseudomonas savastanoi pv. phaseolicola (strain 1448A / Race 6) (Pseudomonas syringae pv. phaseolicola (strain 1448A / Race 6)).